The sequence spans 295 residues: Indole-3-glycerol phosphate synthase (295 aa).

It belongs to the TrpC family.

The enzyme catalyses 1-(2-carboxyphenylamino)-1-deoxy-D-ribulose 5-phosphate + H(+) = (1S,2R)-1-C-(indol-3-yl)glycerol 3-phosphate + CO2 + H2O. It functions in the pathway amino-acid biosynthesis; L-tryptophan biosynthesis; L-tryptophan from chorismate: step 4/5. This Prochlorococcus marinus (strain MIT 9215) protein is Indole-3-glycerol phosphate synthase.